The following is a 215-amino-acid chain: Fanconi anemia core complex-associated protein 24 (215 aa).

In terms of assembly, belongs to the multisubunit FA complex composed of FANCA, FANCB, FANCC, FANCE, FANCF, FANCG, FANCL/PHF9, FANCM and FAAP24. Interacts with FANCM.

It localises to the nucleus. Functionally, plays a role in DNA repair through recruitment of the FA core complex to damaged DNA. Regulates FANCD2 monoubiquitination upon DNA damage. Induces chromosomal instability as well as hypersensitivity to DNA cross-linking agents, when repressed. Targets FANCM/FAAP24 complex to the DNA, preferentially to single strand DNA. The polypeptide is Fanconi anemia core complex-associated protein 24 (Bos taurus (Bovine)).